Consider the following 332-residue polypeptide: Fe(3+) dicitrate transport system permease protein FecC (332 aa).

The Cytoplasmic portion of the chain corresponds to 1-7 (MTAIKHP). The chain crosses the membrane as a helical span at residues 8 to 28 (VLLWGLPVAALIIIFWLSLFC). Residues 29 to 64 (YSAIPVSGADATRALLPGHTPTLPEALVQNLRLPRS) are Periplasmic-facing. Residues 65-85 (LVAVLIGASLALAGTLLQTLT) traverse the membrane as a helical segment. Residues 86–100 (HNPMASPSLLGINSG) are Cytoplasmic-facing. The helical transmembrane segment at 101–121 (AALAMALTSALSPTPIAGYSL) threads the bilayer. Residue S122 is a topological domain, periplasmic. Residues 123 to 143 (FIAACGGGVSWLLVMTAGGGF) traverse the membrane as a helical segment. Topologically, residues 144 to 151 (RHTHDRNK) are cytoplasmic. A helical transmembrane segment spans residues 152-172 (LILAGIALSAFCMGLTRITLL). At 173–199 (LAEDHAYGIFYWLAGGVSHARWQDVWQ) the chain is on the periplasmic side. A helical membrane pass occupies residues 200-220 (LLPVVVTAVPVVLLLANQLNL). Residues 221-244 (LNLSDSTAHTLGVNLTRLRLVINM) lie on the Cytoplasmic side of the membrane. Residues 245 to 265 (LVLLLVGACVSVAGPVAFIGL) traverse the membrane as a helical segment. Topologically, residues 266–307 (LVPHLARFWAGFDQRNVLPVSMLLGATLMLLADVLARALAFP) are periplasmic. A helical membrane pass occupies residues 308–328 (GDLPAGAVLALIGSPCFVWLV). Topologically, residues 329–332 (RRRG) are cytoplasmic.

Belongs to the binding-protein-dependent transport system permease family. FecCD subfamily. In terms of assembly, the complex is composed of two ATP-binding proteins (FecE), two transmembrane proteins (FecC and FecD) and a solute-binding protein (FecB). Interacts with FecB.

It localises to the cell inner membrane. Its function is as follows. Part of the ABC transporter complex FecBCDE involved in citrate-dependent Fe(3+) uptake. Probably responsible for the translocation of the substrate across the membrane. The sequence is that of Fe(3+) dicitrate transport system permease protein FecC from Escherichia coli (strain K12).